Consider the following 202-residue polypeptide: Dephospho-CoA kinase (202 aa).

One can recognise a DPCK domain in the interval 5-202; sequence ILGLTGGIGS…FYLTLRGGQP (198 aa). 13–18 provides a ligand contact to ATP; sequence GSGKSA.

The protein belongs to the CoaE family.

Its subcellular location is the cytoplasm. It catalyses the reaction 3'-dephospho-CoA + ATP = ADP + CoA + H(+). It participates in cofactor biosynthesis; coenzyme A biosynthesis; CoA from (R)-pantothenate: step 5/5. Functionally, catalyzes the phosphorylation of the 3'-hydroxyl group of dephosphocoenzyme A to form coenzyme A. The sequence is that of Dephospho-CoA kinase from Stutzerimonas stutzeri (Pseudomonas stutzeri).